A 96-amino-acid chain; its full sequence is Co-chaperonin GroES (96 aa).

It belongs to the GroES chaperonin family. In terms of assembly, heptamer of 7 subunits arranged in a ring. Interacts with the chaperonin GroEL.

The protein resides in the cytoplasm. Together with the chaperonin GroEL, plays an essential role in assisting protein folding. The GroEL-GroES system forms a nano-cage that allows encapsulation of the non-native substrate proteins and provides a physical environment optimized to promote and accelerate protein folding. GroES binds to the apical surface of the GroEL ring, thereby capping the opening of the GroEL channel. The sequence is that of Co-chaperonin GroES from Pelagibacter ubique (strain HTCC1062).